A 199-amino-acid polypeptide reads, in one-letter code: MVKMAESLFTIFLEGVFIKNFLLIQFLGLCSFVGVTKDLKSASGMSGAVVFVMAMAATVSFALYNFILVPLKLEFLRTIAFIVVIAALVQLVEFIVRKHVPALYRSLGIYLPLITTNCAVLGAVLLNVMNDYDLAQSVVFGVAAGLGYTVAMLMMAAIRERSDLVEVPKSVGRGVTYAFFIATIMSMSFVNFFGVIPLE.

The next 6 helical transmembrane spans lie at 8–28, 49–69, 75–95, 106–126, 138–158, and 178–198; these read LFTI…QFLG, VVFV…FILV, FLRT…VEFI, SLGI…AVLL, VVFG…MAAI, and AFFI…VIPL.

It belongs to the NqrDE/RnfAE family. The Rnf complex is probably composed of eight subunits, including RnfA, RnfB, RnfC, RnfD, RnfE and RnfG.

The protein localises to the cell membrane. Functionally, part of a membrane-bound complex that couples electron transfer with translocation of ions across the membrane. Catalyzes Na(+) transport, most probably coupled to electron transfer from reduced ferredoxin to methanophenazine and heterodisulfide reductase. Involved in heterodisulfide reduction during methanogenesis from acetate. The polypeptide is Ion-translocating oxidoreductase complex subunit A (Methanosarcina acetivorans (strain ATCC 35395 / DSM 2834 / JCM 12185 / C2A)).